Consider the following 484-residue polypeptide: Malonate-semialdehyde dehydrogenase 1 (484 aa).

The NAD(+) site is built by Phe154, Lys178, Glu181, Arg182, and Ser231. Residue Cys286 is the Nucleophile of the active site. Glu384 lines the NAD(+) pocket.

The protein belongs to the aldehyde dehydrogenase family. IolA subfamily. Homotetramer.

It catalyses the reaction 3-oxopropanoate + NAD(+) + CoA + H2O = hydrogencarbonate + acetyl-CoA + NADH + H(+). It carries out the reaction 2-methyl-3-oxopropanoate + NAD(+) + CoA + H2O = propanoyl-CoA + hydrogencarbonate + NADH + H(+). The protein operates within polyol metabolism; myo-inositol degradation into acetyl-CoA; acetyl-CoA from myo-inositol: step 7/7. In terms of biological role, catalyzes the oxidation of malonate semialdehyde (MSA) and methylmalonate semialdehyde (MMSA) into acetyl-CoA and propanoyl-CoA, respectively. Is involved in a myo-inositol catabolic pathway. Bicarbonate, and not CO2, is the end-product of the enzymatic reaction. The protein is Malonate-semialdehyde dehydrogenase 1 of Bacillus licheniformis (strain ATCC 14580 / DSM 13 / JCM 2505 / CCUG 7422 / NBRC 12200 / NCIMB 9375 / NCTC 10341 / NRRL NRS-1264 / Gibson 46).